The sequence spans 51 residues: Ribosome biogenesis protein Nop10 (51 aa).

This sequence belongs to the NOP10 family.

Its function is as follows. Involved in ribosome biogenesis; more specifically in 18S rRNA pseudouridylation and in cleavage of pre-rRNA. In Methanococcus maripaludis (strain C6 / ATCC BAA-1332), this protein is Ribosome biogenesis protein Nop10.